Reading from the N-terminus, the 313-residue chain is Tetraspanning orphan receptor (313 aa).

Topologically, residues 1 to 54 (PQCESETNFHYDIPPGYKDDVLVDVNNMSPSLVSDTQKHERGSHEVKIKHFSPY) are extracellular. A helical transmembrane segment spans residues 55–75 (IAVCVTTFSLAFCCFMVHAAI). The Cytoplasmic portion of the chain corresponds to 76–82 (TRQPTHL). A helical membrane pass occupies residues 83–103 (LPFFFIQVFDLIICLIHILGF). The Extracellular portion of the chain corresponds to 104–129 (MSSTSDIRLVIHTKTGPIYIKSTGLT). The helical transmembrane segment at 130–150 (FIILSISCMMLAFKAYCLGMV) threads the bilayer. The Cytoplasmic segment spans residues 151–313 (WDCYKYLMLN…NASSNAHSSC (163 aa)). 2 disordered regions span residues 192-218 (NNSI…YDPA) and 279-313 (NTNT…HSSC). Low complexity predominate over residues 279 to 295 (NTNTSTTTSVISPLTTT). Polar residues predominate over residues 301-313 (QINNASSNAHSSC).

As to quaternary structure, interacts (via N-terminal extracellular domain) with human C2a. Phosphorylated on tyrosine residues.

Its subcellular location is the cell membrane. Functionally, cell surface receptor that binds to human complement C2a protein. This results in inhibition of the classical and lectin pathways of complement activation, probably due to interference with binding of C2a to C4b and interference with cleavage by C1 or MASP2 such that C3 convertase cannot be formed. This infers resistance to complement-mediated cell lysis, allowing parasite survival and infection. The polypeptide is Tetraspanning orphan receptor (Schistosoma haematobium (Blood fluke)).